A 274-amino-acid polypeptide reads, in one-letter code: Pyrroline-5-carboxylate reductase 3 (274 aa).

At A2 the chain carries N-acetylalanine.

This sequence belongs to the pyrroline-5-carboxylate reductase family. Homodecamer; composed of 5 homodimers.

The protein localises to the cytoplasm. It carries out the reaction L-proline + NADP(+) = (S)-1-pyrroline-5-carboxylate + NADPH + 2 H(+). The catalysed reaction is L-proline + NAD(+) = (S)-1-pyrroline-5-carboxylate + NADH + 2 H(+). Its pathway is amino-acid biosynthesis; L-proline biosynthesis; L-proline from L-glutamate 5-semialdehyde: step 1/1. Oxidoreductase that catalyzes the last step in proline biosynthesis, which corresponds to the reduction of pyrroline-5-carboxylate (P5C) to L-proline using NAD(P)H. Proline is synthesized from either glutamate or ornithine; both are converted to P5C, and then to proline via pyrroline-5-carboxylate reductases (PYCRs). PYCR3 is exclusively linked to the biosynthesis of proline from ornithine. In Mus musculus (Mouse), this protein is Pyrroline-5-carboxylate reductase 3.